A 1093-amino-acid polypeptide reads, in one-letter code: MASVPAEAETRQRLLRTVKKEVKQIMEEAVTRKFVHEDSSHIISFCAAVEACVLHGLRRRAAGFLRSNKIAALFMKVGKGFPPAEELSRKVQELEQLIESARNQIQGLQENVRKLPKLPNLSPLAIKHLWIRTALFGRVLDKIVHYLVENSSKYYEKEALLMDPVDGPILASLLVGPCALEYTKMKTADHFWTDPSADELVQRHRIHSSHLRQDSPTKRPALCIQKRHSSGSMDDRPSISARDYVESLHQDSRATLLYGKNNVLVQPRDDMEAVPGYLSLHQTADVMTLKWTPNQLMNGSVGDLDYEKSVYWDYAVTIRLEEIVYLHCHQQVDSGGTVVLVSQDGIQRPPFRFPKGGHLLQFLSCLENGLLPHGQLDPPLWSQRGKGKVFPKLRKRSPQGSSESTSSDKEDDEATDYVFRIIYPGTQSEFVPQDLMDVSMNNLPPLWQPSPRKSSCSSCSQSGSADGGSTNGCNHERAPLKLLCDNMKYQILSRAFYGWLAYCRHLSTVRTHLSALVNHMIVSPDLPCDAGQGLTASIWEKYIQDSTTYPEQELLRLIYYGGVQPEIRRAVWPFLLGHYQFGMTEMERKEVDEQIHACYAQTMSEWLGCEAIVRQRERESHAAALAKCSSGASLDSHLHRMLHRDSTISNESSQSCSSGRQNLRLQSDSSSSTQVFESVDEVEQTEAEGRSEEKHPKIPNGNPANGTCSPDSGHPSSHNFSSGLSEHSEPSLSTEDSVLDAQRSLPAVFRPGDSSVEDGQSSEATTSRDEAPREELAVQDSLESDLLANESLEEFMSIPGSLDVALPEKDGAVMDGWPGEADKPSRADSEDNLSEEPEMESLFPALASLAVTSSANNEASPVSSSGVTYSPELLDLYTVNLHRIEKDVQRCDRSYWYFTAANLEKLRNIMCSYIWQHIEIGYVQGMCDLLAPLLVILDDEALAFSCFTELMKRMNQNFPHGGAMDTHFANMRSLIQILDSELFELMHQNGDYTHFYFCYRWFLLDFKRELVYDDVFSVWETIWAAKHVSSAHYVLFIALALVEVYRDIILENNMDFTDIIKFFNEMAERHNAKQILQLARDLVHKVQILIENK.

The 155-residue stretch at 36–190 folds into the RUN domain; it reads HEDSSHIISF…EYTKMKTADH (155 aa). The segment at 256–297 is important for interaction with RAB9A and RAB9B; it reads LLYGKNNVLVQPRDDMEAVPGYLSLHQTADVMTLKWTPNQLM. The segment at 301-350 is required for interaction with RAP family members; the sequence is VGDLDYEKSVYWDYAVTIRLEEIVYLHCHQQVDSGGTVVLVSQDGIQRPP. 3 disordered regions span residues 377-412, 645-778, and 810-838; these read DPPLWSQRGKGKVFPKLRKRSPQGSSESTSSDKEDD, DSTI…ELAV, and DGAVMDGWPGEADKPSRADSEDNLSEEPE. Positions 385–397 are enriched in basic residues; the sequence is GKGKVFPKLRKRS. The region spanning 562–1026 is the Rab-GAP TBC domain; sequence GVQPEIRRAV…SVWETIWAAK (465 aa). The span at 647-676 shows a compositional bias: polar residues; that stretch reads TISNESSQSCSSGRQNLRLQSDSSSSTQVF. The span at 687–696 shows a compositional bias: basic and acidic residues; sequence AEGRSEEKHP. A compositionally biased stretch (polar residues) spans 702–736; the sequence is NPANGTCSPDSGHPSSHNFSSGLSEHSEPSLSTED. 2 stretches are compositionally biased toward basic and acidic residues: residues 766-776 and 820-829; these read TSRDEAPREEL and EADKPSRADS.

The protein belongs to the RUTBC family. In terms of assembly, interacts with RAB9A (GTP-bound form) and RAB9B. Interacts with RAB3A, RAB4A, RAB5A, RAB8A, RAB11A, RAP1A, RAP1B, RAP2A and RAP2B. No interaction with RAB27A. Expressed only in brain.

Its subcellular location is the golgi apparatus. The protein resides in the trans-Golgi network. It localises to the cytoplasm. The protein localises to the cytoplasmic vesicle membrane. In terms of biological role, interacts with numerous Rab family members, functioning as Rab effector for some, and as GTPase activator for others. Promotes GTP hydrolysis by RAB34 and RAB36. Probably functions as a GTPase effector with RAB9A and RAB9B; does not stimulate GTP hydrolysis with RAB9A and RAB9B. The chain is Small G protein signaling modulator 1 (Sgsm1) from Mus musculus (Mouse).